We begin with the raw amino-acid sequence, 199 residues long: Chaperone protein TorD (199 aa).

The protein belongs to the TorD/DmsD family. TorD subfamily.

Its subcellular location is the cytoplasm. Involved in the biogenesis of TorA. Acts on TorA before the insertion of the molybdenum cofactor and, as a result, probably favors a conformation of the apoenzyme that is competent for acquiring the cofactor. The protein is Chaperone protein TorD of Actinobacillus pleuropneumoniae serotype 3 (strain JL03).